The chain runs to 181 residues: Regulator of G-protein signaling 5 (181 aa).

An RGS domain is found at S64 to I180.

The protein localises to the cytoplasm. It is found in the membrane. In terms of biological role, inhibits signal transduction by increasing the GTPase activity of G protein alpha subunits thereby driving them into their inactive GDP-bound form. Binds to G(i)-alpha and G(o)-alpha, but not to G(s)-alpha. In Bos taurus (Bovine), this protein is Regulator of G-protein signaling 5 (RGS5).